Here is a 249-residue protein sequence, read N- to C-terminus: GTP cyclohydrolase 1 type 2 homolog (249 aa).

A divalent metal cation is bound by residues His64, His65, Asp102, His217, and Glu221.

It belongs to the GTP cyclohydrolase I type 2/NIF3 family. Homohexamer.

The chain is GTP cyclohydrolase 1 type 2 homolog from Neisseria meningitidis serogroup A / serotype 4A (strain DSM 15465 / Z2491).